Reading from the N-terminus, the 172-residue chain is Large ribosomal subunit protein uL10 (172 aa).

The protein belongs to the universal ribosomal protein uL10 family. In terms of assembly, part of the ribosomal stalk of the 50S ribosomal subunit. The N-terminus interacts with L11 and the large rRNA to form the base of the stalk. The C-terminus forms an elongated spine to which L12 dimers bind in a sequential fashion forming a multimeric L10(L12)X complex.

Forms part of the ribosomal stalk, playing a central role in the interaction of the ribosome with GTP-bound translation factors. This chain is Large ribosomal subunit protein uL10, found in Bradyrhizobium sp. (strain ORS 278).